The chain runs to 702 residues: Mesothelin-like protein (702 aa).

The signal sequence occupies residues 1–35; it reads MAAAVTIPGPRIGALQSSGLTLLLSLAAHCSGPQA. Residues 36-638 lie on the Extracellular side of the membrane; that stretch reads KVLSPGGLDA…AQASTSGSLW (603 aa). Asn-122, Asn-307, and Asn-424 each carry an N-linked (GlcNAc...) asparagine glycan. The tract at residues 588 to 611 is disordered; the sequence is QLGLDASPTSPTGPAHGTRGPPST. The chain crosses the membrane as a helical span at residues 639 to 668; that stretch reads APLGYLPLAMALPCSLLCLLHWGTCILVSV. Residues 669-702 lie on the Cytoplasmic side of the membrane; it reads DSVASGWLGSQGSGAGKTEVLDSAGRPLGLTGQL.

It belongs to the mesothelin family.

Its subcellular location is the membrane. Its function is as follows. May play a role in cellular adhesion. The polypeptide is Mesothelin-like protein (MSLNL) (Homo sapiens (Human)).